The chain runs to 307 residues: Coproporphyrin III ferrochelatase (307 aa).

Fe-coproporphyrin III is bound by residues tyrosine 12, arginine 29, 45-46 (RY), serine 53, and tyrosine 124. Fe(2+) contacts are provided by histidine 181 and glutamate 263.

Belongs to the ferrochelatase family.

The protein resides in the cytoplasm. It carries out the reaction Fe-coproporphyrin III + 2 H(+) = coproporphyrin III + Fe(2+). It functions in the pathway porphyrin-containing compound metabolism; protoheme biosynthesis. In terms of biological role, involved in coproporphyrin-dependent heme b biosynthesis. Catalyzes the insertion of ferrous iron into coproporphyrin III to form Fe-coproporphyrin III. It can also insert iron into protoporphyrin IX, but it has a much stronger preference for coproprophyrin III as the substrate. This Staphylococcus aureus (strain NCTC 8325 / PS 47) protein is Coproporphyrin III ferrochelatase.